The chain runs to 23 residues: Thymidine phosphorylase (23 aa).

Belongs to the thymidine/pyrimidine-nucleoside phosphorylase family. In terms of assembly, homodimer.

The catalysed reaction is thymidine + phosphate = 2-deoxy-alpha-D-ribose 1-phosphate + thymine. The enzymes which catalyze the reversible phosphorolysis of pyrimidine nucleosides are involved in the degradation of these compounds and in their utilization as carbon and energy sources, or in the rescue of pyrimidine bases for nucleotide synthesis. In Lacticaseibacillus rhamnosus (Lactobacillus rhamnosus), this protein is Thymidine phosphorylase (deoA).